The chain runs to 346 residues: NADH-ubiquinone oxidoreductase chain 2 (346 aa).

A run of 10 helical transmembrane segments spans residues 25–45, 52–72, 95–115, 124–144, 149–169, 178–198, 200–220, 242–262, 274–294, and 326–346; these read HWIL…PLIS, AIEA…LILF, CLML…HFWF, LITA…LLLL, LNTT…GWMG, ILAF…SYNP, LTIL…LSLA, ATVM…GFMP, EMTP…FFYL, and AILT…ITML.

This sequence belongs to the complex I subunit 2 family. In terms of assembly, core subunit of respiratory chain NADH dehydrogenase (Complex I) which is composed of 45 different subunits.

Its subcellular location is the mitochondrion inner membrane. The enzyme catalyses a ubiquinone + NADH + 5 H(+)(in) = a ubiquinol + NAD(+) + 4 H(+)(out). Its function is as follows. Core subunit of the mitochondrial membrane respiratory chain NADH dehydrogenase (Complex I) which catalyzes electron transfer from NADH through the respiratory chain, using ubiquinone as an electron acceptor. Essential for the catalytic activity and assembly of complex I. This is NADH-ubiquinone oxidoreductase chain 2 (MT-ND2) from Gallus gallus (Chicken).